A 589-amino-acid polypeptide reads, in one-letter code: MATRTHASNELSETLQGEKVVLKGWVQRRRDLGGLIFIDLRDRTGITQVVFSPDVAEAHALADKVRSEYVIEIEGTVILRTEDQINPNVPNGKIEVEATRLVVINTAKTTPFQIEDRTDVSEDLRLKYRYLDLRRPVMFDTFKMRSDVTRTIRNFLQNEGFLEVETPILTKSTPEGARDYLVPSRVHEGEFYALPQSPQLFKQLLMVAGFEKYFQIARCFRDEDLRADRQPEFTQVDIETSFLTQEEVLEMNERLIQAVMKEVKGIDIPAPFQRMKYQEAMDRYGSDKPDVRFGLELVALNDVFEGCGFKVFADTVAQGKQVKSINIKGAADKYSRKDMDELTKFVGIYGAKGLAWLKVTEEGLNGPIAKFFDEALAAALIERMGAEVGDILVFVADKASVVAASLGALRTKLGQDLDLIDESQFAFLWITDWPLFEYSEEDGRYYAAHHPFTRPFDEDIPLMDTDPSAVRAQAYDIVLNGYELGGGSLRIYERDLQEKMFELLGFSEEEAQAQFGFLLEAFEYGVPPHAGLAFGLDRFVMLLAGRHNLRDTIAFPKTASASCLMTEAPSEVSPEQLSELSLAIKPFRK.

Glu175 contacts L-aspartate. Residues 199-202 (QLFK) form an aspartate region. Residue Arg221 coordinates L-aspartate. ATP-binding positions include 221–223 (RDE) and Gln230. Residue His449 participates in L-aspartate binding. Glu483 is a binding site for ATP. Position 490 (Arg490) interacts with L-aspartate. ATP is bound at residue 535 to 538 (GLDR).

The protein belongs to the class-II aminoacyl-tRNA synthetase family. Type 1 subfamily. Homodimer.

It localises to the cytoplasm. It catalyses the reaction tRNA(Asp) + L-aspartate + ATP = L-aspartyl-tRNA(Asp) + AMP + diphosphate. Functionally, catalyzes the attachment of L-aspartate to tRNA(Asp) in a two-step reaction: L-aspartate is first activated by ATP to form Asp-AMP and then transferred to the acceptor end of tRNA(Asp). This chain is Aspartate--tRNA ligase, found in Lysinibacillus sphaericus (strain C3-41).